Reading from the N-terminus, the 122-residue chain is Small ribosomal subunit protein uS13 (122 aa).

The tract at residues 95-122 (GLPVRGQRTHTNARTRKGPAKSIAGKKK) is disordered.

This sequence belongs to the universal ribosomal protein uS13 family. Part of the 30S ribosomal subunit. Forms a loose heterodimer with protein S19. Forms two bridges to the 50S subunit in the 70S ribosome.

In terms of biological role, located at the top of the head of the 30S subunit, it contacts several helices of the 16S rRNA. In the 70S ribosome it contacts the 23S rRNA (bridge B1a) and protein L5 of the 50S subunit (bridge B1b), connecting the 2 subunits; these bridges are implicated in subunit movement. Contacts the tRNAs in the A and P-sites. The polypeptide is Small ribosomal subunit protein uS13 (Rhodopseudomonas palustris (strain BisB18)).